Here is a 350-residue protein sequence, read N- to C-terminus: Ribosomal RNA large subunit methyltransferase M (350 aa).

Residues serine 184, alanine 217–glycine 220, aspartate 236, aspartate 256, and aspartate 272 contribute to the S-adenosyl-L-methionine site. Lysine 301 functions as the Proton acceptor in the catalytic mechanism.

Belongs to the class I-like SAM-binding methyltransferase superfamily. RNA methyltransferase RlmE family. RlmM subfamily. Monomer.

The protein localises to the cytoplasm. It carries out the reaction cytidine(2498) in 23S rRNA + S-adenosyl-L-methionine = 2'-O-methylcytidine(2498) in 23S rRNA + S-adenosyl-L-homocysteine + H(+). Its function is as follows. Catalyzes the 2'-O-methylation at nucleotide C2498 in 23S rRNA. This is Ribosomal RNA large subunit methyltransferase M from Marinomonas sp. (strain MWYL1).